The following is a 265-amino-acid chain: 5'-nucleotidase SurE (265 aa).

Residues Asp8, Asp9, Ser40, and Asn98 each coordinate a divalent metal cation.

The protein belongs to the SurE nucleotidase family. A divalent metal cation is required as a cofactor.

Its subcellular location is the cytoplasm. The catalysed reaction is a ribonucleoside 5'-phosphate + H2O = a ribonucleoside + phosphate. Nucleotidase that shows phosphatase activity on nucleoside 5'-monophosphates. This is 5'-nucleotidase SurE from Thermosynechococcus vestitus (strain NIES-2133 / IAM M-273 / BP-1).